Consider the following 155-residue polypeptide: SsrA-binding protein (155 aa).

Belongs to the SmpB family.

It localises to the cytoplasm. In terms of biological role, required for rescue of stalled ribosomes mediated by trans-translation. Binds to transfer-messenger RNA (tmRNA), required for stable association of tmRNA with ribosomes. tmRNA and SmpB together mimic tRNA shape, replacing the anticodon stem-loop with SmpB. tmRNA is encoded by the ssrA gene; the 2 termini fold to resemble tRNA(Ala) and it encodes a 'tag peptide', a short internal open reading frame. During trans-translation Ala-aminoacylated tmRNA acts like a tRNA, entering the A-site of stalled ribosomes, displacing the stalled mRNA. The ribosome then switches to translate the ORF on the tmRNA; the nascent peptide is terminated with the 'tag peptide' encoded by the tmRNA and targeted for degradation. The ribosome is freed to recommence translation, which seems to be the essential function of trans-translation. The protein is SsrA-binding protein of Bacillus cereus (strain G9842).